A 730-amino-acid chain; its full sequence is Elongation factor 2 (730 aa).

Residues 19-229 (LMIRNIGIVA…GVSFSEVFNY (211 aa)) enclose the tr-type G domain. GTP contacts are provided by residues 28 to 35 (AHIDHGKT), 94 to 98 (DTPGH), and 148 to 151 (NKVD). Diphthamide is present on His-596.

The protein belongs to the TRAFAC class translation factor GTPase superfamily. Classic translation factor GTPase family. EF-G/EF-2 subfamily.

It is found in the cytoplasm. Catalyzes the GTP-dependent ribosomal translocation step during translation elongation. During this step, the ribosome changes from the pre-translocational (PRE) to the post-translocational (POST) state as the newly formed A-site-bound peptidyl-tRNA and P-site-bound deacylated tRNA move to the P and E sites, respectively. Catalyzes the coordinated movement of the two tRNA molecules, the mRNA and conformational changes in the ribosome. The protein is Elongation factor 2 (fusA) of Methanococcoides burtonii (strain DSM 6242 / NBRC 107633 / OCM 468 / ACE-M).